Consider the following 364-residue polypeptide: UDP-N-acetylglucosamine--N-acetylmuramyl-(pentapeptide) pyrophosphoryl-undecaprenol N-acetylglucosamine transferase (364 aa).

Residues 10 to 12 (TGG), N124, S195, and Q295 contribute to the UDP-N-acetyl-alpha-D-glucosamine site.

It belongs to the glycosyltransferase 28 family. MurG subfamily.

It is found in the cell membrane. It catalyses the reaction di-trans,octa-cis-undecaprenyl diphospho-N-acetyl-alpha-D-muramoyl-L-alanyl-D-glutamyl-meso-2,6-diaminopimeloyl-D-alanyl-D-alanine + UDP-N-acetyl-alpha-D-glucosamine = di-trans,octa-cis-undecaprenyl diphospho-[N-acetyl-alpha-D-glucosaminyl-(1-&gt;4)]-N-acetyl-alpha-D-muramoyl-L-alanyl-D-glutamyl-meso-2,6-diaminopimeloyl-D-alanyl-D-alanine + UDP + H(+). Its pathway is cell wall biogenesis; peptidoglycan biosynthesis. Functionally, cell wall formation. Catalyzes the transfer of a GlcNAc subunit on undecaprenyl-pyrophosphoryl-MurNAc-pentapeptide (lipid intermediate I) to form undecaprenyl-pyrophosphoryl-MurNAc-(pentapeptide)GlcNAc (lipid intermediate II). This chain is UDP-N-acetylglucosamine--N-acetylmuramyl-(pentapeptide) pyrophosphoryl-undecaprenol N-acetylglucosamine transferase, found in Bacillus pumilus (strain SAFR-032).